Consider the following 152-residue polypeptide: MKCPSCQHNGSRVLDSRPADEGKSIRRRRECEACHYRFTTFEKFEEMPLIVVKKEGVREEFSREKMLRGLIKACEKRPVPLKTLEDMCFDIEKELRNQGVSEVKSELVGEMVMDRLAKIDEVSYVRFASVYRQFKDINVFIDELKDLIKKER.

Residues 1–10 (MKCPSCQHNG) show a composition bias toward polar residues. The interval 1–21 (MKCPSCQHNGSRVLDSRPADE) is disordered. The segment at 3–34 (CPSCQHNGSRVLDSRPADEGKSIRRRRECEAC) is a zinc-finger region. Positions 49–139 (LIVVKKEGVR…VYRQFKDINV (91 aa)) constitute an ATP-cone domain.

Belongs to the NrdR family. It depends on Zn(2+) as a cofactor.

Negatively regulates transcription of bacterial ribonucleotide reductase nrd genes and operons by binding to NrdR-boxes. The polypeptide is Transcriptional repressor NrdR (Bacillus velezensis (strain DSM 23117 / BGSC 10A6 / LMG 26770 / FZB42) (Bacillus amyloliquefaciens subsp. plantarum)).